A 3856-amino-acid polypeptide reads, in one-letter code: Serine/threonine-protein kinase ATM (3856 aa).

The PWWP domain occupies 108–162 (VGNLVWVMTKYKKWWPGEVVDFKADAKESFMVRSIGQSHLVSWFASSKLKPFKES). Residues 648 to 681 (GIPDLNGTNTEPTLVLPQVEPTQRRRRRKKEESP) are disordered. Positions 2727–3393 (VVAGSAVVCG…ILQLLALANG (667 aa)) constitute an FAT domain. Positions 3233-3249 (RKHKTKELEVFIKRFKS) match the Bipartite nuclear localization signal motif. A PI3K/PI4K catalytic domain is found at 3499–3811 (LSDSVTVMNG…GNKDATRALM (313 aa)). Residues 3505-3511 (VMNGINA) form a G-loop region. The interval 3678–3686 (GLGDRHAMN) is catalytic loop. An activation loop region spans residues 3698–3722 (HIDLGVAFEQGLMLKTPERVPFRLT). One can recognise an FATC domain in the interval 3824-3856 (EMRSIHGQAQQLIQDAIDTDRLSHMFPGWGAWM).

Belongs to the PI3/PI4-kinase family. In terms of assembly, interacts with RUG3. Ubiquitously expressed at low levels with slightly higher levels in flower buds.

It localises to the nucleus. The enzyme catalyses L-seryl-[protein] + ATP = O-phospho-L-seryl-[protein] + ADP + H(+). It carries out the reaction L-threonyl-[protein] + ATP = O-phospho-L-threonyl-[protein] + ADP + H(+). Functionally, serine/threonine protein kinase which activates checkpoint signaling upon genotoxic stresses such as ionizing radiation (IR) or DNA replication stalling. Plays a central role in the perception and response to both stress-induced damage in somatic cells and developmentally programmed DNA damage during meiosis. Recognizes the substrate consensus sequence [ST]-Q. Phosphorylates histone variant H2AX to form H2AXS139ph at double strand breaks (DSBs), thereby regulating DNA damage response mechanism. Involved in transcriptional regulation of RAD51, PARP1, GR1, and LIG4 in response to DNA double strand breaks. Plays a dual role by activating the DNA damage response at dysfunctional telomeres and yet preventing this activation at functional telomeres. Not required for telomere length homeostasis. Regulates DNA damage response (DDR) synergistically with RUG3. Together with RUG3, involved in the splicing of the ND2/NAD2 mRNA. In Arabidopsis thaliana (Mouse-ear cress), this protein is Serine/threonine-protein kinase ATM.